A 437-amino-acid polypeptide reads, in one-letter code: Enolase 2 (437 aa).

Residues His-160 and Glu-169 each contribute to the substrate site. Catalysis depends on Glu-212, which acts as the Proton donor. Positions 247, 296, and 321 each coordinate Mg(2+). Positions 296 and 321 each coordinate substrate. Lys-346 (proton acceptor) is an active-site residue. Substrate contacts are provided by residues 373–376 (SHRS) and Lys-397.

The protein belongs to the enolase family. In terms of assembly, homodimer. Mg(2+) serves as cofactor.

It localises to the cytoplasm. It catalyses the reaction (2R)-2-phosphoglycerate = phosphoenolpyruvate + H2O. It participates in carbohydrate degradation; glycolysis; pyruvate from D-glyceraldehyde 3-phosphate: step 4/5. The protein is Enolase 2 (ENO2) of Candida glabrata (strain ATCC 2001 / BCRC 20586 / JCM 3761 / NBRC 0622 / NRRL Y-65 / CBS 138) (Yeast).